The sequence spans 381 residues: MSLNMFWFLPTHGDGHYLGTEEGSRPVDHGYLQQIAQAADRLGYTGVLIPTGRSCEDAWLVAASMIPVTQRLKFLVALRPSVTSPTVAARQAATLDRLSNGRALFNLVTGSDPQELAGDGVFLDHSERYEASAEFTQVWRRLLLGETVNFNGKHIHVRGAKLLFPPIQQPYPPLYFGGSSDVAQELAAEQVDLYLTWGEPPELVKEKIEQVRAKAAAHGRKIRFGIRLHVIVRETNDEAWQAAERLISHLDDETIAKAQAAFARTDSVGQQRMAALHNGKRDNLEISPNLWAGVGLVRGGAGTALVGDGPTVAARINEYAALGIDSFVLSGYPHLEEAYRVGELLFPHLDVAIPEIPQPQPLNPQGEAVANDFIPRKVAQS.

This sequence belongs to the SsuD family. Homotetramer.

The catalysed reaction is an alkanesulfonate + FMNH2 + O2 = an aldehyde + FMN + sulfite + H2O + 2 H(+). Its function is as follows. Catalyzes the desulfonation of aliphatic sulfonates. This is Alkanesulfonate monooxygenase from Escherichia coli (strain SE11).